A 381-amino-acid polypeptide reads, in one-letter code: ADP,ATP carrier protein 1, mitochondrial (381 aa).

The N-terminal 70 residues, 1–70, are a transit peptide targeting the mitochondrion; that stretch reads MVDQVQHPTI…ATTASPVFVQ (70 aa). Solcar repeat units follow at residues 78–171, 183–276, and 284–370; these read TNFA…FKRL, KWFA…VKPV, and DSFF…LQLI. 5 helical membrane-spanning segments follow: residues 80-107, 148-172, 181-201, 252-273, and 287-307; these read FALDFLMGGVSAAVSKTAAAPIERVKLL, TANVIRYFPTQALNFAFKDYFKRLF, YWKWFAGNLASGGAAGASSLL, FNISCVGIIVYRGLYFGLYDSV, and FASFALGWVITNGAGLASYPI. Arg153 and Lys165 together coordinate ADP. Arg311 lines the ADP pocket. Positions 311-316 are important for transport activity; that stretch reads RRRMMM. Positions 311–316 match the Nucleotide carrier signature motif motif; sequence RRRMMM. Residues 347–367 traverse the membrane as a helical segment; sequence AGANILRAVAGAGVLSGYDKL.

The protein belongs to the mitochondrial carrier (TC 2.A.29) family. As to quaternary structure, monomer.

It is found in the mitochondrion inner membrane. The enzyme catalyses ADP(in) + ATP(out) = ADP(out) + ATP(in). The matrix-open state (m-state) is inhibited by the membrane-permeable bongkrekic acid (BKA). The cytoplasmic-open state (c-state) is inhibited by the membrane-impermeable toxic inhibitor carboxyatractyloside (CATR). ADP:ATP antiporter that mediates import of ADP into the mitochondrial matrix for ATP synthesis, and export of ATP out to fuel the cell. Cycles between the cytoplasmic-open state (c-state) and the matrix-open state (m-state): operates by the alternating access mechanism with a single substrate-binding site intermittently exposed to either the cytosolic (c-state) or matrix (m-state) side of the inner mitochondrial membrane. This Arabidopsis thaliana (Mouse-ear cress) protein is ADP,ATP carrier protein 1, mitochondrial (AAC1).